We begin with the raw amino-acid sequence, 637 residues long: MGRLLEQISSSRDIRSLTFKQLNELAGEIRQVLINTVSKTGGHLAPNLGVVELTLGLHRVFHSPVDKIIWDVGHQSYVHKLITGRYKEFYTLRQFGGISGFPRPSESVHDAFGTGHSSTSISAALGMAIARDLKGEKYSVVAVIGDGAMTGGIAFEALNHAGHLKCNLIVVLNDNEMSIAQNVGAMSGYLTRLRTDPMYSRGKEEIEQLLRRIPIGSALLRLGERVKDSLKYLVVPGMIFEELGFTYLGPVDGHDLRAITTVLQHARARKGPVLVHVLTKKGKGYSPAESNPDRFHGIGAFDVATGEAVKKSNIPTYTEVFGRTMVKLAREFDNMLAITAAMTGGTGLTEFARLYPKRFFDVGIAEQHAVTLAAGMATGGFRPVVAIYSTFLQRAYDQILHDVCLQNLPVTFAIDRAGIVGEDGATHHGLFDFSYLRPIPNMVIMAPKDENELQHMLYTALSHPGPAAVRYPRSAGTGCRMDDSFKIIPLGRAEVLRDGTEVTLLAVGSMVCLAVKAAEILAGHGIDAAVINARFVKPLDKECILRYARRTREVFTLEENVLQGGFGSAVQELLSSCGERGVSVHCFGIPDSFVEHGNRALLLARYGLTVEQVVRAVLERFAQRRHPKKLKVVSEKA.

Residues His-74 and 115–117 (GHS) each bind thiamine diphosphate. Position 146 (Asp-146) interacts with Mg(2+). Residues 147–148 (GA), Asn-175, Tyr-285, and Glu-366 each bind thiamine diphosphate. Mg(2+) is bound at residue Asn-175.

It belongs to the transketolase family. DXPS subfamily. As to quaternary structure, homodimer. Mg(2+) serves as cofactor. It depends on thiamine diphosphate as a cofactor.

The catalysed reaction is D-glyceraldehyde 3-phosphate + pyruvate + H(+) = 1-deoxy-D-xylulose 5-phosphate + CO2. It functions in the pathway metabolic intermediate biosynthesis; 1-deoxy-D-xylulose 5-phosphate biosynthesis; 1-deoxy-D-xylulose 5-phosphate from D-glyceraldehyde 3-phosphate and pyruvate: step 1/1. Functionally, catalyzes the acyloin condensation reaction between C atoms 2 and 3 of pyruvate and glyceraldehyde 3-phosphate to yield 1-deoxy-D-xylulose-5-phosphate (DXP). The protein is 1-deoxy-D-xylulose-5-phosphate synthase of Pelotomaculum thermopropionicum (strain DSM 13744 / JCM 10971 / SI).